Consider the following 355-residue polypeptide: tRNA-specific 2-thiouridylase MnmA 1 (355 aa).

6–13 (LLSGGVDS) provides a ligand contact to ATP. The segment at 92 to 94 (NPD) is interaction with target base in tRNA. Residue Cys97 is the Nucleophile of the active site. Cys97 and Cys192 form a disulfide bridge. Gly120 serves as a coordination point for ATP. Residues 142 to 144 (KDQ) are interaction with tRNA. Cys192 functions as the Cysteine persulfide intermediate in the catalytic mechanism.

This sequence belongs to the MnmA/TRMU family.

Its subcellular location is the cytoplasm. The catalysed reaction is S-sulfanyl-L-cysteinyl-[protein] + uridine(34) in tRNA + AH2 + ATP = 2-thiouridine(34) in tRNA + L-cysteinyl-[protein] + A + AMP + diphosphate + H(+). In terms of biological role, catalyzes the 2-thiolation of uridine at the wobble position (U34) of tRNA, leading to the formation of s(2)U34. The sequence is that of tRNA-specific 2-thiouridylase MnmA 1 from Bacteroides thetaiotaomicron (strain ATCC 29148 / DSM 2079 / JCM 5827 / CCUG 10774 / NCTC 10582 / VPI-5482 / E50).